Consider the following 573-residue polypeptide: Proline--tRNA ligase (573 aa).

It belongs to the class-II aminoacyl-tRNA synthetase family. ProS type 1 subfamily. Homodimer.

The protein localises to the cytoplasm. The catalysed reaction is tRNA(Pro) + L-proline + ATP = L-prolyl-tRNA(Pro) + AMP + diphosphate. Catalyzes the attachment of proline to tRNA(Pro) in a two-step reaction: proline is first activated by ATP to form Pro-AMP and then transferred to the acceptor end of tRNA(Pro). As ProRS can inadvertently accommodate and process non-cognate amino acids such as alanine and cysteine, to avoid such errors it has two additional distinct editing activities against alanine. One activity is designated as 'pretransfer' editing and involves the tRNA(Pro)-independent hydrolysis of activated Ala-AMP. The other activity is designated 'posttransfer' editing and involves deacylation of mischarged Ala-tRNA(Pro). The misacylated Cys-tRNA(Pro) is not edited by ProRS. This chain is Proline--tRNA ligase, found in Geobacter sp. (strain M21).